The chain runs to 354 residues: Transcription factor ATOH1 (354 aa).

Residues 1–21 (MSRLLHAEEWAEVKELGDHHR) are compositionally biased toward basic and acidic residues. Disordered stretches follow at residues 1-55 (MSRL…ELSL) and 91-122 (EAAAPRDEVDGRGELVRRSSGGASSSKSPGPV). Residues 26–38 (HHLPQPPPPPQPP) show a composition bias toward pro residues. A compositionally biased stretch (basic and acidic residues) spans 94–107 (APRDEVDGRGELVR). Low complexity predominate over residues 108–122 (RSSGGASSSKSPGPV). Residues 159-211 (QRRLAANARERRRMHGLNHAFDQLRNVIPSFNNDKKLSKYETLQMAQIYINAL) form the bHLH domain. Disordered regions lie at residues 216–277 (QTPS…TRFS) and 312–354 (SPSL…DEAS). A compositionally biased stretch (low complexity) spans 250–264 (NATAAGAQQASGGSQ). A compositionally biased stretch (basic and acidic residues) spans 335 to 354 (HRSDGEFSPHSHYSDSDEAS).

In terms of assembly, efficient DNA binding requires dimerization with another bHLH protein.

It is found in the nucleus. Its function is as follows. Transcriptional regulator. Activates E box-dependent transcription in collaboration with TCF3/E47, but the activity is completely antagonized by the negative regulator of neurogenesis HES1. Plays a role in the differentiation of subsets of neural cells by activating E box-dependent transcription. The polypeptide is Transcription factor ATOH1 (Homo sapiens (Human)).